A 269-amino-acid polypeptide reads, in one-letter code: Formamidopyrimidine-DNA glycosylase (269 aa).

P2 functions as the Schiff-base intermediate with DNA in the catalytic mechanism. Residue E3 is the Proton donor of the active site. The active-site Proton donor; for beta-elimination activity is the K57. DNA contacts are provided by H90, R109, and K150. The segment at 235–269 adopts an FPG-type zinc-finger fold; the sequence is QVYGRKGEPCRVCGTPIVATKHAQRATFYCRHCQK. Residue R259 is the Proton donor; for delta-elimination activity of the active site.

It belongs to the FPG family. Monomer. It depends on Zn(2+) as a cofactor.

The enzyme catalyses Hydrolysis of DNA containing ring-opened 7-methylguanine residues, releasing 2,6-diamino-4-hydroxy-5-(N-methyl)formamidopyrimidine.. It carries out the reaction 2'-deoxyribonucleotide-(2'-deoxyribose 5'-phosphate)-2'-deoxyribonucleotide-DNA = a 3'-end 2'-deoxyribonucleotide-(2,3-dehydro-2,3-deoxyribose 5'-phosphate)-DNA + a 5'-end 5'-phospho-2'-deoxyribonucleoside-DNA + H(+). Its function is as follows. Involved in base excision repair of DNA damaged by oxidation or by mutagenic agents. Acts as a DNA glycosylase that recognizes and removes damaged bases. Has a preference for oxidized purines, such as 7,8-dihydro-8-oxoguanine (8-oxoG). Has AP (apurinic/apyrimidinic) lyase activity and introduces nicks in the DNA strand. Cleaves the DNA backbone by beta-delta elimination to generate a single-strand break at the site of the removed base with both 3'- and 5'-phosphates. The protein is Formamidopyrimidine-DNA glycosylase of Salmonella dublin (strain CT_02021853).